A 442-amino-acid chain; its full sequence is Thymidine phosphorylase (442 aa).

It belongs to the thymidine/pyrimidine-nucleoside phosphorylase family. In terms of assembly, homodimer.

It catalyses the reaction thymidine + phosphate = 2-deoxy-alpha-D-ribose 1-phosphate + thymine. The protein operates within pyrimidine metabolism; dTMP biosynthesis via salvage pathway; dTMP from thymine: step 1/2. The enzymes which catalyze the reversible phosphorolysis of pyrimidine nucleosides are involved in the degradation of these compounds and in their utilization as carbon and energy sources, or in the rescue of pyrimidine bases for nucleotide synthesis. In Vibrio parahaemolyticus serotype O3:K6 (strain RIMD 2210633), this protein is Thymidine phosphorylase.